Here is a 726-residue protein sequence, read N- to C-terminus: Methionine--tRNA ligase (726 aa).

Positions 12–22 match the 'HIGH' region motif; that stretch reads PYVNNIPHLGN. Zn(2+)-binding residues include C143, C146, C155, and C158. The 'KMSKS' region motif lies at 330 to 334; that stretch reads KFSKS. ATP is bound at residue K333. The tRNA-binding domain occupies 562–667; sequence FSEKVCLKVV…DNPIPGERII (106 aa).

The protein belongs to the class-I aminoacyl-tRNA synthetase family. MetG type 1 subfamily. As to quaternary structure, homodimer. Zn(2+) is required as a cofactor.

It is found in the cytoplasm. It catalyses the reaction tRNA(Met) + L-methionine + ATP = L-methionyl-tRNA(Met) + AMP + diphosphate. Functionally, is required not only for elongation of protein synthesis but also for the initiation of all mRNA translation through initiator tRNA(fMet) aminoacylation. This chain is Methionine--tRNA ligase, found in Borrelia turicatae (strain 91E135).